The following is a 521-amino-acid chain: MIKQALISVSDKSGIVDFAKSLSDLGVKILSTGGTAKLLADAGLPVTEVADYTGFPEMLDGRVKTLHPKVHGGILARRDLPEHMAALEKHDIPTIDLLVVNLYPFVQTVSKEECTLEDAIENIDIGGPTMLRSAAKNHRDVTVVVDPADYATVLDEMRANGNTVGYKTNFRLATKVFAHTAQYDGAITNYLTSLTEQLQHRDRNTYPATLNMAFEKVQDLRYGENPHQSAAFYRDIAAPAGALANYRQLQGKELSYNNIADSDAAWECVKTFDAPACVIIKHANPCGVAVGANPHEAYSKAFQTDPTSAFGGIIAFNREVDETAAQAVAKQFVEVLIAPSFSEAAKQLFAAKQNVRLLEIALGEGHNAFDLKRVGGGLLVQSLDAKNVQPHELRVVTKRHPTPKEMDDLLFAWRVAKFVKSNAIVFCANGMTMGVGAGQMSRVDSARIASIKAQNAGLTLSGTAVASDAFFPFRDGLDVVVNAGATCVIQPGGSMRDDEVIAAADEHNIAMVVTGIRHFRH.

The MGS-like domain maps to 1 to 145 (MIKQALISVS…KNHRDVTVVV (145 aa)).

The protein belongs to the PurH family.

It catalyses the reaction (6R)-10-formyltetrahydrofolate + 5-amino-1-(5-phospho-beta-D-ribosyl)imidazole-4-carboxamide = 5-formamido-1-(5-phospho-D-ribosyl)imidazole-4-carboxamide + (6S)-5,6,7,8-tetrahydrofolate. It carries out the reaction IMP + H2O = 5-formamido-1-(5-phospho-D-ribosyl)imidazole-4-carboxamide. It participates in purine metabolism; IMP biosynthesis via de novo pathway; 5-formamido-1-(5-phospho-D-ribosyl)imidazole-4-carboxamide from 5-amino-1-(5-phospho-D-ribosyl)imidazole-4-carboxamide (10-formyl THF route): step 1/1. It functions in the pathway purine metabolism; IMP biosynthesis via de novo pathway; IMP from 5-formamido-1-(5-phospho-D-ribosyl)imidazole-4-carboxamide: step 1/1. This Paraburkholderia phymatum (strain DSM 17167 / CIP 108236 / LMG 21445 / STM815) (Burkholderia phymatum) protein is Bifunctional purine biosynthesis protein PurH.